The primary structure comprises 552 residues: Glutamine--tRNA ligase (552 aa).

The 'HIGH' region motif lies at 34–44; it reads PEPNGYLHIGH. ATP is bound by residues 35–37 and 41–47; these read EPN and HIGHAKS. Residues aspartate 67 and tyrosine 212 each contribute to the L-glutamine site. ATP is bound by residues threonine 231, 261-262, and 269-271; these read RL and MSK. A 'KMSKS' region motif is present at residues 268 to 272; it reads LMSKR.

It belongs to the class-I aminoacyl-tRNA synthetase family. Monomer.

The protein localises to the cytoplasm. The catalysed reaction is tRNA(Gln) + L-glutamine + ATP = L-glutaminyl-tRNA(Gln) + AMP + diphosphate. The chain is Glutamine--tRNA ligase from Hamiltonella defensa subsp. Acyrthosiphon pisum (strain 5AT).